We begin with the raw amino-acid sequence, 449 residues long: Doublesex- and mab-3-related transcription factor A2 (449 aa).

Positions 57–104 form a DNA-binding region, DM; the sequence is CARCRNHGVVSALKGHKRYCRWKDCMCAKCTLIAERQRVMAAQVALRR. The segment at 163 to 259 is disordered; it reads FPKTQLSGST…PSPSSAASRH (97 aa). A compositionally biased stretch (polar residues) spans 166–187; it reads TQLSGSTTTQKSVGKPASTESD. Positions 230-240 are enriched in low complexity; the sequence is GSVSSLGSDSG. Residues 260 to 295 form the DMA domain; sequence MNAIDILTRVFPSHKRSVLELVLQGCGKDVVQAIEQ.

It belongs to the DMRT family. In terms of tissue distribution, expressed in brain and eye.

It is found in the nucleus. Its function is as follows. May be involved in sexual development. The protein is Doublesex- and mab-3-related transcription factor A2 (dmrta2) of Xiphophorus maculatus (Southern platyfish).